A 130-amino-acid polypeptide reads, in one-letter code: MSKPRIALIAHDAKKDEIVALAGQYRNTLAQCRLVATGTTGGRIAAAHGLEVERKLSGPLGGDLQIGAELADGRVDVVVFLRDPMTAQPHDPDITALVRACDVHDVPVATNVATARMLLDDLARNMQDVC.

The 130-residue stretch at 1-130 (MSKPRIALIA…DLARNMQDVC (130 aa)) folds into the MGS-like domain. Residues His-11, Lys-15, 37–40 (TGTT), and 57–58 (SG) contribute to the substrate site. The Proton donor/acceptor role is filled by Asp-63. His-90 provides a ligand contact to substrate.

Belongs to the methylglyoxal synthase family.

It catalyses the reaction dihydroxyacetone phosphate = methylglyoxal + phosphate. Its function is as follows. Catalyzes the formation of methylglyoxal from dihydroxyacetone phosphate. The protein is Methylglyoxal synthase of Burkholderia vietnamiensis (strain G4 / LMG 22486) (Burkholderia cepacia (strain R1808)).